The sequence spans 132 residues: S-protein homolog 15 (132 aa).

An N-terminal signal peptide occupies residues 1–20 (MSRLIFFILVTAIYFVGNEA).

The protein belongs to the plant self-incompatibility (S1) protein family.

It is found in the secreted. The polypeptide is S-protein homolog 15 (Arabidopsis thaliana (Mouse-ear cress)).